The following is a 547-amino-acid chain: DNA ligase (547 aa).

E244 contributes to the ATP binding site. The N6-AMP-lysine intermediate role is filled by K246. ATP contacts are provided by R251, R266, E295, F334, R405, and K411.

Belongs to the ATP-dependent DNA ligase family. Mg(2+) is required as a cofactor.

The enzyme catalyses ATP + (deoxyribonucleotide)n-3'-hydroxyl + 5'-phospho-(deoxyribonucleotide)m = (deoxyribonucleotide)n+m + AMP + diphosphate.. Functionally, DNA ligase that seals nicks in double-stranded DNA during DNA replication, DNA recombination and DNA repair. The chain is DNA ligase from Methanospirillum hungatei JF-1 (strain ATCC 27890 / DSM 864 / NBRC 100397 / JF-1).